A 1372-amino-acid polypeptide reads, in one-letter code: Serine protease pic autotransporter (1372 aa).

The first 55 residues, 1-55 (MNKVYSLKYCPVTGGLIAVSELARRVIKKTCRRLTHILLAGIPAICLCYSQISQA), serve as a signal peptide directing secretion. Positions 56-301 (GIVRSDIAYQ…NVIPTDYLNQ (246 aa)) constitute a Peptidase S6 domain. Residues H127, D155, and S258 each act as charge relay system in the active site. An Autotransporter domain is found at 1106–1372 (DTNGDAGAWA…AVNANFRYMF (267 aa)).

In terms of processing, cleaved to release the mature protein from the outer membrane.

The protein localises to the periplasm. Its subcellular location is the secreted. The protein resides in the cell surface. It is found in the cell outer membrane. In terms of biological role, involved in intestinal colonization, displays in vitro mucinolytic activity, serum resistance, and hemagglutination. Important to penetrate the intestinal mucus layer. The sequence is that of Serine protease pic autotransporter (pic) from Shigella flexneri.